We begin with the raw amino-acid sequence, 445 residues long: Exodeoxyribonuclease 7 large subunit (445 aa).

It belongs to the XseA family. As to quaternary structure, heterooligomer composed of large and small subunits.

It localises to the cytoplasm. It carries out the reaction Exonucleolytic cleavage in either 5'- to 3'- or 3'- to 5'-direction to yield nucleoside 5'-phosphates.. Bidirectionally degrades single-stranded DNA into large acid-insoluble oligonucleotides, which are then degraded further into small acid-soluble oligonucleotides. In Xanthomonas oryzae pv. oryzae (strain MAFF 311018), this protein is Exodeoxyribonuclease 7 large subunit.